Consider the following 85-residue polypeptide: MSIFDYFRAKRAPTSASLAKERLQIIVAHERNKRSLQQPDYLPQMREEIIAVIRKYIPIDSSQVSVNVDNSENCSVLELNITLPD.

This sequence belongs to the MinE family.

Functionally, prevents the cell division inhibition by proteins MinC and MinD at internal division sites while permitting inhibition at polar sites. This ensures cell division at the proper site by restricting the formation of a division septum at the midpoint of the long axis of the cell. The sequence is that of Cell division topological specificity factor from Cellvibrio japonicus (strain Ueda107) (Pseudomonas fluorescens subsp. cellulosa).